A 345-amino-acid polypeptide reads, in one-letter code: Phosphoribosylformylglycinamidine cyclo-ligase (345 aa).

The protein belongs to the AIR synthase family.

The protein resides in the cytoplasm. The catalysed reaction is 2-formamido-N(1)-(5-O-phospho-beta-D-ribosyl)acetamidine + ATP = 5-amino-1-(5-phospho-beta-D-ribosyl)imidazole + ADP + phosphate + H(+). It functions in the pathway purine metabolism; IMP biosynthesis via de novo pathway; 5-amino-1-(5-phospho-D-ribosyl)imidazole from N(2)-formyl-N(1)-(5-phospho-D-ribosyl)glycinamide: step 2/2. The sequence is that of Phosphoribosylformylglycinamidine cyclo-ligase from Prochlorococcus marinus (strain MIT 9313).